The sequence spans 188 residues: Ribosome maturation factor RimP (188 aa).

This sequence belongs to the RimP family.

The protein localises to the cytoplasm. Its function is as follows. Required for maturation of 30S ribosomal subunits. The sequence is that of Ribosome maturation factor RimP from Corynebacterium aurimucosum (strain ATCC 700975 / DSM 44827 / CIP 107346 / CN-1) (Corynebacterium nigricans).